A 250-amino-acid polypeptide reads, in one-letter code: Ribosomal RNA small subunit methyltransferase J (250 aa).

S-adenosyl-L-methionine contacts are provided by residues 96–97 and D168; that span reads RD.

It belongs to the methyltransferase superfamily. RsmJ family.

It localises to the cytoplasm. It catalyses the reaction guanosine(1516) in 16S rRNA + S-adenosyl-L-methionine = N(2)-methylguanosine(1516) in 16S rRNA + S-adenosyl-L-homocysteine + H(+). In terms of biological role, specifically methylates the guanosine in position 1516 of 16S rRNA. The polypeptide is Ribosomal RNA small subunit methyltransferase J (Neisseria meningitidis serogroup C / serotype 2a (strain ATCC 700532 / DSM 15464 / FAM18)).